The following is a 329-amino-acid chain: uncharacterized protein (329 aa).

Coiled-coil stretches lie at residues 57-119 and 224-250; these read KKEE…LQEV and AQRQ…LGNV.

This is an uncharacterized protein from Macaca fascicularis (Crab-eating macaque).